A 664-amino-acid chain; its full sequence is Glycine--tRNA ligase beta subunit (664 aa).

The protein belongs to the class-II aminoacyl-tRNA synthetase family. Tetramer of two alpha and two beta subunits.

The protein localises to the cytoplasm. It carries out the reaction tRNA(Gly) + glycine + ATP = glycyl-tRNA(Gly) + AMP + diphosphate. In Aquifex aeolicus (strain VF5), this protein is Glycine--tRNA ligase beta subunit (glyS).